The primary structure comprises 572 residues: MSRKMFSCDFETTTKLDDCRVWAYGYMEIGNLDNYKIGNSLDEFMQWVMEIQADLYFHNLKFDGAFIVNWLEQHGFKWSNEGLPNTYNTIISKMGQWYMIDICFGYRGKRKLHTVIYDSLKKLPFPVKKIAKDFQLPLLKGDIDYHTERPVGHEITPEEYEYIKNDIEIIARALDIQFKQGLDRMTAGSDSLKGFKDILSTKKFNKVFPKLSLPMDKEIRKAYRGGFTWLNDKYKEKEIGEGMVFDVNSLYPSQMYSRPLPYGAPIVFQGKYEKDEQYPLYIQRIRFEFELKEGYIPTIQIKKNPFFKGNEYLKNSGVEPVELYLTNVDLELIQEHYELYNVEYIDGFKFREKTGLFKDFIDKWTYVKTHEEGAKKQLAKLMLNSLYGKFASNPDVTGKVPYLKDDGSLGFRVGDEEYKDPVYTPMGVFITAWARFTTITAAQACYDRIIYCDTDSIHLTGTEVPEIIKDIVDPKKLGYWAHESTFKRAKYLRQKTYIQDIYVKEVDGKLKECSPDEATTTKFSVKCAGMTDTIKKKVTFDNFAVGFSSMGKPKPVQVNGGVVLVDSVFTIK.

Residues 1 to 222 (MSRKMFSCDF…LPMDKEIRKA (222 aa)) form a 3'-5' exonuclease and strand displacement activities region. The interaction with the primer terminal protein stretch occupies residues 56–66 (YFHNLKFDGAF). Residues aspartate 142 and aspartate 166 each contribute to the Mg(2+) site. The DNA-binding; Involved in the formation of a stable complex between TP and phi29 DNA polymerase stretch occupies residues 223–226 (YRGG). The interval 227-572 (FTWLNDKYKE…VLVDSVFTIK (346 aa)) is initiation, polymerization and pyrophosphorolytic activities. Positions 246 and 247 each coordinate Mg(2+). 5-methyl-UTP contacts are provided by tyrosine 251, lysine 368, and lysine 380. 2 residues coordinate Mg(2+): aspartate 453 and aspartate 455. Aspartate 455 provides a ligand contact to 5-methyl-UTP.

It belongs to the DNA polymerase type-B family. As to quaternary structure, interacts with the primer terminal protein; this interaction allows the initiation of TP-primed DNA replication at both viral DNA ends. Interacts with DNA. Mg(2+) serves as cofactor.

The catalysed reaction is DNA(n) + a 2'-deoxyribonucleoside 5'-triphosphate = DNA(n+1) + diphosphate. Functionally, polymerase responsible for protein-primed viral DNA replication by strand displacement with high processivity and fidelity. To start replication, the DNA polymerase forms a heterodimer with a free primer terminal protein (TP), recognizes the replication origins at both 5' ends of the linear chromosome, and initiates replication using as primer the OH-group of Ser-232 of the TP. This polymerase possesses three enzymatic activities: DNA synthesis (polymerase), primer terminal protein (TP) deoxynucleotidylation, which is the formation of a covalent linkage (phosphoester) between the hydroxyl group of a specific serine residue in TP and 5'-dAMP, a reaction directed by the third T at the 3' end, and 3' to 5' exonuclease activity. Exonuclease activity has a proofreading purpose. Since the polymerase initiates the replication on the third thymine, the TP-dAMP initiation product translocates backwards to recover the template information of the 2 terminal nucleotide (sliding back-mechanism). This chain is DNA polymerase, found in Bacillus phage Nf (Bacteriophage Nf).